The chain runs to 101 residues: NADH-quinone oxidoreductase subunit K (101 aa).

The next 3 membrane-spanning stretches (helical) occupy residues 4-24, 30-50, and 61-81; these read LAHY…GIFL, IVLL…FVAF, and VFVF…LAIL.

Belongs to the complex I subunit 4L family. As to quaternary structure, NDH-1 is composed of 14 different subunits. Subunits NuoA, H, J, K, L, M, N constitute the membrane sector of the complex.

The protein localises to the cell inner membrane. It catalyses the reaction a quinone + NADH + 5 H(+)(in) = a quinol + NAD(+) + 4 H(+)(out). Its function is as follows. NDH-1 shuttles electrons from NADH, via FMN and iron-sulfur (Fe-S) centers, to quinones in the respiratory chain. The immediate electron acceptor for the enzyme in this species is believed to be ubiquinone. Couples the redox reaction to proton translocation (for every two electrons transferred, four hydrogen ions are translocated across the cytoplasmic membrane), and thus conserves the redox energy in a proton gradient. In Ralstonia nicotianae (strain ATCC BAA-1114 / GMI1000) (Ralstonia solanacearum), this protein is NADH-quinone oxidoreductase subunit K.